Consider the following 198-residue polypeptide: Na(+)-translocating NADH-quinone reductase subunit E (198 aa).

6 consecutive transmembrane segments (helical) span residues 11–31 (SIFIENMALSFFLGMCTFLAV), 39–59 (FGLGVAVVVVLTIAVPVNNLV), 77–97 (FLSFITFIGVIAALVQILEMI), 110–130 (GIFLPLITVNCAIFGGVSFMV), 140–160 (VVYGFGSGIGWMLAIVALAGI), and 176–196 (LGITFITVGLMALGFMSFSGV).

This sequence belongs to the NqrDE/RnfAE family. As to quaternary structure, composed of six subunits; NqrA, NqrB, NqrC, NqrD, NqrE and NqrF.

The protein localises to the cell inner membrane. The enzyme catalyses a ubiquinone + n Na(+)(in) + NADH + H(+) = a ubiquinol + n Na(+)(out) + NAD(+). In terms of biological role, NQR complex catalyzes the reduction of ubiquinone-1 to ubiquinol by two successive reactions, coupled with the transport of Na(+) ions from the cytoplasm to the periplasm. NqrA to NqrE are probably involved in the second step, the conversion of ubisemiquinone to ubiquinol. In Aliivibrio fischeri (strain ATCC 700601 / ES114) (Vibrio fischeri), this protein is Na(+)-translocating NADH-quinone reductase subunit E.